We begin with the raw amino-acid sequence, 616 residues long: FAD-linked oxidoreductase cheF (616 aa).

Positions 160 to 344 constitute an FAD-binding PCMH-type domain; the sequence is NQGLVSPWYV…LSMTVRVEPA (185 aa).

The protein belongs to the oxygen-dependent FAD-linked oxidoreductase family. The cofactor is FAD.

It functions in the pathway secondary metabolite biosynthesis. In terms of biological role, FAD-linked oxidoreductase; part of the gene cluster that mediates the biosynthesis of chaetoglobosin A which has a unique inhibitory activity against actin polymerization in mammalian cells. Chaetoglobosin A and its intermediates are involved in the morphological differentiation of C.globosum. The first step of the pathway is the synthesis of prochaetoglobosin I via condensation of one acetyl-CoA, 8 malonyl-CoA, and a L-tryptophan molecule by the PKS-NRPS hybrid synthetase cheA, followed by reduction of backbone double bond to install desired geometry by the enoyl reductase cheB. Further multiple oxidation steps performed by the cytochrome P450 monooxygenases cheE and cheG, as well as by the FAD-linked oxidoreductase cheF, lead to the formation of chaetoglobosin A. Depending on the order of action of these reductases, distinct intermediates can be identified. Within the pathway, the cytochrome P450 monooxygenase cheE catalyzes a stereospecific epoxidation on prochaetoglobosin I, cytoglobosin D, and chaetoglobosin J intermediates. The FAD-linked oxidoreductase cheF performs dehydrogenation of the C-20 hydroxyl groups in the 20-dihyrochaetoglobosin A and cytoglobosin D intermediates. Finally, the cytochrome P450 monooxygenase cheG can catalyze the stereospecific dihydroxylation of prochaetoglobosin I and prochaetoglobosin IV at C-19 and C-20, respectively. The Diels-Alderase cheD may play a role in the post-PKS-NRPS biosynthetic steps catalyzing Diels-Alder cyclization. In Chaetomium globosum (strain ATCC 6205 / CBS 148.51 / DSM 1962 / NBRC 6347 / NRRL 1970) (Soil fungus), this protein is FAD-linked oxidoreductase cheF.